Here is a 152-residue protein sequence, read N- to C-terminus: Deoxyuridine 5'-triphosphate nucleotidohydrolase (152 aa).

Residues 71 to 73 (RSG), asparagine 84, 88 to 90 (LID), and methionine 98 contribute to the substrate site.

It belongs to the dUTPase family. Homotrimer. It depends on Mg(2+) as a cofactor.

The catalysed reaction is dUTP + H2O = dUMP + diphosphate + H(+). The protein operates within pyrimidine metabolism; dUMP biosynthesis; dUMP from dCTP (dUTP route): step 2/2. This enzyme is involved in nucleotide metabolism: it produces dUMP, the immediate precursor of thymidine nucleotides and it decreases the intracellular concentration of dUTP so that uracil cannot be incorporated into DNA. This Escherichia coli O157:H7 protein is Deoxyuridine 5'-triphosphate nucleotidohydrolase.